We begin with the raw amino-acid sequence, 145 residues long: Large ribosomal subunit protein uL15 (145 aa).

Basic and acidic residues predominate over residues 1–18 (MKLHELKYTEGSKKDVTR). Residues 1 to 51 (MKLHELKYTEGSKKDVTRVGRGMASGKGKTSTRGHKGQNSRSGGGVRVGFE) are disordered. Residues 42–51 (SGGGVRVGFE) are compositionally biased toward gly residues.

The protein belongs to the universal ribosomal protein uL15 family. In terms of assembly, part of the 50S ribosomal subunit.

Its function is as follows. Binds to the 23S rRNA. This Mesoplasma florum (strain ATCC 33453 / NBRC 100688 / NCTC 11704 / L1) (Acholeplasma florum) protein is Large ribosomal subunit protein uL15.